Reading from the N-terminus, the 154-residue chain is Cyclin-dependent protein kinase inhibitor SMR11 (154 aa).

Residues 1 to 44 (MEQEEPCEAKETASSSIEPKTPNPNVPDSIPAIDSDSSLSEEEI) are disordered. Over residues 27–38 (PDSIPAIDSDSS) the composition is skewed to low complexity.

As to quaternary structure, interacts with CYCB2-4.

In terms of biological role, probable cyclin-dependent protein kinase (CDK) inhibitor that functions as a repressor of mitosis in the endoreduplication cell cycle. The polypeptide is Cyclin-dependent protein kinase inhibitor SMR11 (Arabidopsis thaliana (Mouse-ear cress)).